Here is a 153-residue protein sequence, read N- to C-terminus: Histone H2B.10 (153 aa).

Composition is skewed to basic and acidic residues over residues 1–28 (MAPK…EKAP) and 36–53 (EKRL…EGKK). Positions 1–61 (MAPKAEKKPA…KKAGRKKAKK (61 aa)) are disordered. 2 positions are modified to N6-acetyllysine: Lys7 and Lys37. Lys149 is covalently cross-linked (Glycyl lysine isopeptide (Lys-Gly) (interchain with G-Cter in ubiquitin)).

This sequence belongs to the histone H2B family. As to quaternary structure, the nucleosome is a histone octamer containing two molecules each of H2A, H2B, H3 and H4 assembled in one H3-H4 heterotetramer and two H2A-H2B heterodimers. The octamer wraps approximately 147 bp of DNA. Post-translationally, can be acetylated to form H2BK6ac and H2BK33ac. Monoubiquitinated by BRE1 to form H2BK143ub1 and deubiquitinated by UBP26. Required for heterochromatic histone H3 di- and trimethylation at H3K4me. May give a specific tag for epigenetic transcriptional activation.

The protein localises to the nucleus. The protein resides in the chromosome. Functionally, core component of nucleosome. Nucleosomes wrap and compact DNA into chromatin, limiting DNA accessibility to the cellular machineries which require DNA as a template. Histones thereby play a central role in transcription regulation, DNA repair, DNA replication and chromosomal stability. DNA accessibility is regulated via a complex set of post-translational modifications of histones, also called histone code, and nucleosome remodeling. This is Histone H2B.10 (H2B.10) from Oryza sativa subsp. indica (Rice).